A 494-amino-acid chain; its full sequence is MTRLASGVLITLLVALAGIADGSRDIAGDILKLPSEAYRFFHNGGGGAKVNDDDDSVGTRWAVLLAGSNGFWNYRHQADICHAYQLLRKGGLKDENIIVFMYDDIAFNEENPRPGVIINHPHGDDVYKGVPKDYTGEDVTVEKFFAVVLGNKTALTGGSGKVVDSGPNDHIFIFYSDHGGPGVLGMPTSRYIYADELIDVLKKKHASGNYKSLVFYLEACESGSIFEGLLLEGLNIYATTASNAEESSWGTYCPGEIPGPPPEYSTCLGDLYSIAWMEDSDIHNLRTETLHQQYELVKTRTASYNSYGSHVMQYGDIGLSKNNLFTYLGTNPANDNYTFVDENSLRPASKAVNQRDADLLHFWDKYRKAPEGTPRKAEAQKQFFEAMSHRMHVDHSIKLIGKLLFGIEKGPEILNTVRPAGQPLVDDWGCLKSLVRTFESHCGALSQYGMKHMRSLANICNTGIGKEKMAEASAQACENIPSGPWSSLDKGFSA.

An N-terminal signal peptide occupies residues 1–20; the sequence is MTRLASGVLITLLVALAGIA. Asn151 is a glycosylation site (N-linked (GlcNAc...) asparagine). His178 is an active-site residue. The active-site Nucleophile is the Cys220. A disulfide bridge connects residues Cys253 and Cys267. N-linked (GlcNAc...) asparagine glycosylation is present at Asn336. Cystine bridges form between Cys430/Cys460 and Cys442/Cys477.

The protein belongs to the peptidase C13 family. In terms of tissue distribution, high levels are seen in the flowers, a lower level expression is seen in the leaves, while very low levels are seen in the stems and roots.

Asparagine-specific endopeptidase that may be involved in processing of proteins targeted to vacuoles that accumulate during ethylene-regulated processes such as flower opening and flavedo degreening. In Citrus sinensis (Sweet orange), this protein is Vacuolar-processing enzyme.